The following is a 577-amino-acid chain: Arginine--tRNA ligase (577 aa).

The 'HIGH' region signature appears at 122 to 132; sequence PNVAKEMHVGH.

This sequence belongs to the class-I aminoacyl-tRNA synthetase family. Monomer.

It is found in the cytoplasm. It carries out the reaction tRNA(Arg) + L-arginine + ATP = L-arginyl-tRNA(Arg) + AMP + diphosphate. The sequence is that of Arginine--tRNA ligase from Escherichia fergusonii (strain ATCC 35469 / DSM 13698 / CCUG 18766 / IAM 14443 / JCM 21226 / LMG 7866 / NBRC 102419 / NCTC 12128 / CDC 0568-73).